Reading from the N-terminus, the 191-residue chain is Potassium-transporting ATPase KdpC subunit (191 aa).

The chain crosses the membrane as a helical span at residues 6 to 26; that stretch reads PALVLFILLTLLTGGVYPLLT.

It belongs to the KdpC family. As to quaternary structure, the system is composed of three essential subunits: KdpA, KdpB and KdpC.

The protein localises to the cell inner membrane. In terms of biological role, part of the high-affinity ATP-driven potassium transport (or Kdp) system, which catalyzes the hydrolysis of ATP coupled with the electrogenic transport of potassium into the cytoplasm. This subunit acts as a catalytic chaperone that increases the ATP-binding affinity of the ATP-hydrolyzing subunit KdpB by the formation of a transient KdpB/KdpC/ATP ternary complex. The polypeptide is Potassium-transporting ATPase KdpC subunit (Klebsiella pneumoniae subsp. pneumoniae (strain ATCC 700721 / MGH 78578)).